The primary structure comprises 381 residues: Succinyl-diaminopimelate desuccinylase (381 aa).

His-68 contacts Zn(2+). The active site involves Asp-70. Asp-101 lines the Zn(2+) pocket. The Proton acceptor role is filled by Glu-135. Zn(2+)-binding residues include Glu-136, Glu-164, and His-350.

The protein belongs to the peptidase M20A family. DapE subfamily. In terms of assembly, homodimer. Zn(2+) is required as a cofactor. Co(2+) serves as cofactor.

The catalysed reaction is N-succinyl-(2S,6S)-2,6-diaminopimelate + H2O = (2S,6S)-2,6-diaminopimelate + succinate. The protein operates within amino-acid biosynthesis; L-lysine biosynthesis via DAP pathway; LL-2,6-diaminopimelate from (S)-tetrahydrodipicolinate (succinylase route): step 3/3. Catalyzes the hydrolysis of N-succinyl-L,L-diaminopimelic acid (SDAP), forming succinate and LL-2,6-diaminopimelate (DAP), an intermediate involved in the bacterial biosynthesis of lysine and meso-diaminopimelic acid, an essential component of bacterial cell walls. This is Succinyl-diaminopimelate desuccinylase from Neisseria gonorrhoeae (strain NCCP11945).